The following is a 182-amino-acid chain: Putative manganese efflux pump MntP (182 aa).

Transmembrane regions (helical) follow at residues L6 to G26, I37 to V57, H71 to L91, I101 to L121, I131 to I151, and Y162 to I182.

Belongs to the MntP (TC 9.B.29) family.

The protein resides in the cell membrane. Its function is as follows. Probably functions as a manganese efflux pump. The chain is Putative manganese efflux pump MntP from Bacillus cereus (strain ATCC 10987 / NRS 248).